Reading from the N-terminus, the 303-residue chain is UDP-N-acetylenolpyruvoylglucosamine reductase (303 aa).

An FAD-binding PCMH-type domain is found at 32–212 (IGGKADLFLN…EQETKEYLAK (181 aa)). Arginine 176 is an active-site residue. Serine 226 acts as the Proton donor in catalysis. The active site involves glutamate 296.

It belongs to the MurB family. The cofactor is FAD.

The protein localises to the cytoplasm. The enzyme catalyses UDP-N-acetyl-alpha-D-muramate + NADP(+) = UDP-N-acetyl-3-O-(1-carboxyvinyl)-alpha-D-glucosamine + NADPH + H(+). It functions in the pathway cell wall biogenesis; peptidoglycan biosynthesis. Cell wall formation. The protein is UDP-N-acetylenolpyruvoylglucosamine reductase of Desulforamulus reducens (strain ATCC BAA-1160 / DSM 100696 / MI-1) (Desulfotomaculum reducens).